A 945-amino-acid polypeptide reads, in one-letter code: Kinesin-like protein KIN-UA (945 aa).

The interval 1 to 54 is disordered; the sequence is MAANGRASVRPVERHGAPPRPAGRSRSVAPPSRRPSPSPSRARPAAADNDGGSD. Over residues 22 to 31 the composition is skewed to low complexity; it reads AGRSRSVAPP. A Kinesin motor domain is found at 57–399; the sequence is RVRVAVRLRP…IMFGQRAMKI (343 aa). Position 142 to 149 (142 to 149) interacts with ATP; that stretch reads GQTGTGKT. Residues 369–377 carry the D-BOX motif; the sequence is RTSLIVTIG. Positions 415 to 644 form a coiled coil; it reads YKKVEHEVDH…ILRLKQSLAD (230 aa). 4 ARM repeats span residues 683–722, 724–764, 766–806, and 808–847; these read RSNISKIFEEVGLPNVLALLKSDELEVQIHAVKVVANLAA, DVNQ…NLAM, GSNQ…NLCG, and EKLHVMLKQDGGIKALLGMFRTGHNEVIAQIARGMANFAK.

It belongs to the TRAFAC class myosin-kinesin ATPase superfamily. Kinesin family. Ungrouped subfamily.

It localises to the cytoplasm. Its subcellular location is the cytoskeleton. This chain is Kinesin-like protein KIN-UA, found in Oryza sativa subsp. japonica (Rice).